The sequence spans 443 residues: Putative metabolite transport protein YaaU (443 aa).

The Cytoplasmic segment spans residues 1 to 18; sequence MQPSRNFDDLKFSSIHRR. A helical transmembrane segment spans residues 19-39; that stretch reads ILLWGSGGPFLDGYVLVMIGV. The Periplasmic segment spans residues 40-53; the sequence is ALEQLTPALKLDAD. The helical transmembrane segment at 54–74 threads the bilayer; the sequence is WIGLLGAGTLAGLFVGTSLFG. Residues 75 to 84 lie on the Cytoplasmic side of the membrane; that stretch reads YISDKVGRRK. The chain crosses the membrane as a helical span at residues 85–105; it reads MFLIDIIAIGVISVATMFVSS. Residues 106-113 are Periplasmic-facing; the sequence is PVELLVMR. The helical transmembrane segment at 114-134 threads the bilayer; sequence VLIGIVIGADYPIATSMITEF. The Cytoplasmic segment spans residues 135–145; that stretch reads SSTRQRAFSIS. Residues 146-166 traverse the membrane as a helical segment; sequence FIAAMWYVGATCADLVGYWLY. Residues 167 to 173 are Periplasmic-facing; that stretch reads DVEGGWR. A helical membrane pass occupies residues 174–194; the sequence is WMLGSAAIPCLLILIGRFELP. At 195-241 the chain is on the cytoplasmic side; the sequence is ESPRWLLRKGRVKECEEMMIKLFGEPVAFDEEQPQQTRFRDLFNRRH. The chain crosses the membrane as a helical span at residues 242–262; the sequence is FPFVLFVAAIWTCQVIPMFAI. At 263–282 the chain is on the periplasmic side; the sequence is YTFGPQIVGLLGLGVGKNAA. A helical transmembrane segment spans residues 283-303; sequence LGNVVISLFFMLGCIPPMLWL. Residues 304–309 lie on the Cytoplasmic side of the membrane; it reads NTAGRR. A helical transmembrane segment spans residues 310-329; it reads PLLIGSFAMMTLALAVLGLI. At 330–334 the chain is on the periplasmic side; sequence PDMGI. Residues 335-357 form a helical membrane-spanning segment; it reads WLVVMAFAVYAFFSGGPGNLQWL. The Cytoplasmic segment spans residues 358–373; that stretch reads YPNELFPTDIRASAVG. A helical transmembrane segment spans residues 374–394; the sequence is VIMSLSRIGTIVSTWALPIFI. Residues 395–401 are Periplasmic-facing; the sequence is NNYGISN. The chain crosses the membrane as a helical span at residues 402–422; sequence TMLMGAGISLFGLLISVAFAP. The Cytoplasmic portion of the chain corresponds to 423-443; that stretch reads ETRGMSLAQTSNMTIRGQRMG.

It belongs to the major facilitator superfamily. Sugar transporter (TC 2.A.1.1) family.

The protein localises to the cell inner membrane. This is Putative metabolite transport protein YaaU (yaaU) from Escherichia coli (strain K12).